The sequence spans 138 residues: MALLPDKEKLLRNFLRCANWEEKYLYIIELGQRLPELRDEDKSPQNSIQGCQSQVWIVMRQNAQGIIELQGDSDAAIVKGLIAVVIILYDQMTPQDIVNFDVRPWFEKMALTQHLTPSRSQGLEAMIRAIRAKAAALS.

The active-site Cysteine persulfide intermediate is the C51.

Belongs to the SufE family. As to quaternary structure, homodimer. Interacts with SufS.

The protein resides in the cytoplasm. The protein operates within cofactor biosynthesis; iron-sulfur cluster biosynthesis. In terms of biological role, participates in cysteine desulfuration mediated by SufS. Cysteine desulfuration mobilizes sulfur from L-cysteine to yield L-alanine and constitutes an essential step in sulfur metabolism for biosynthesis of a variety of sulfur-containing biomolecules. Functions as a sulfur acceptor for SufS, by mediating the direct transfer of the sulfur atom from the S-sulfanylcysteine of SufS, an intermediate product of cysteine desulfuration process. The chain is Cysteine desulfuration protein SufE from Escherichia coli O6:K15:H31 (strain 536 / UPEC).